The following is a 373-amino-acid chain: Protein phosphatase 1K, mitochondrial (373 aa).

The region spanning 95 to 347 (KVGCSTQLGK…DNSTAIVVPF (253 aa)) is the PPM-type phosphatase domain. Residues Asp-128, Gly-129, and Asp-338 each coordinate Mg(2+).

The protein belongs to the PP2C family. Mg(2+) is required as a cofactor. Mn(2+) serves as cofactor.

The protein localises to the mitochondrion matrix. It catalyses the reaction O-phospho-L-seryl-[protein] + H2O = L-seryl-[protein] + phosphate. The catalysed reaction is O-phospho-L-threonyl-[protein] + H2O = L-threonyl-[protein] + phosphate. The protein is Protein phosphatase 1K, mitochondrial (ppm1k) of Xenopus laevis (African clawed frog).